The following is a 305-amino-acid chain: UDP-N-acetylenolpyruvoylglucosamine reductase 2 (305 aa).

An FAD-binding PCMH-type domain is found at 33-197 (VGGKADVFVA…LEARFELEEG (165 aa)). Residue arginine 176 is part of the active site. Serine 226 serves as the catalytic Proton donor. Residue glutamate 296 is part of the active site.

This sequence belongs to the MurB family. FAD is required as a cofactor.

It is found in the cytoplasm. The catalysed reaction is UDP-N-acetyl-alpha-D-muramate + NADP(+) = UDP-N-acetyl-3-O-(1-carboxyvinyl)-alpha-D-glucosamine + NADPH + H(+). Its pathway is cell wall biogenesis; peptidoglycan biosynthesis. In terms of biological role, cell wall formation. This chain is UDP-N-acetylenolpyruvoylglucosamine reductase 2 (murB2), found in Bacillus anthracis.